The following is a 419-amino-acid chain: UDP-N-acetylglucosamine 1-carboxyvinyltransferase (419 aa).

22-23 contributes to the phosphoenolpyruvate binding site; that stretch reads KN. Arginine 93 provides a ligand contact to UDP-N-acetyl-alpha-D-glucosamine. The active-site Proton donor is cysteine 117. The residue at position 117 (cysteine 117) is a 2-(S-cysteinyl)pyruvic acid O-phosphothioketal. UDP-N-acetyl-alpha-D-glucosamine-binding residues include aspartate 307 and isoleucine 329.

This sequence belongs to the EPSP synthase family. MurA subfamily.

The protein localises to the cytoplasm. The enzyme catalyses phosphoenolpyruvate + UDP-N-acetyl-alpha-D-glucosamine = UDP-N-acetyl-3-O-(1-carboxyvinyl)-alpha-D-glucosamine + phosphate. Its pathway is cell wall biogenesis; peptidoglycan biosynthesis. Its function is as follows. Cell wall formation. Adds enolpyruvyl to UDP-N-acetylglucosamine. The chain is UDP-N-acetylglucosamine 1-carboxyvinyltransferase from Shewanella sp. (strain ANA-3).